The following is a 93-amino-acid chain: Large ribosomal subunit protein uL23cz/uL23cy (93 aa).

Belongs to the universal ribosomal protein uL23 family. In terms of assembly, part of the 50S ribosomal subunit.

The protein localises to the plastid. It localises to the chloroplast. Its function is as follows. Binds to 23S rRNA. The sequence is that of Large ribosomal subunit protein uL23cz/uL23cy (rpl23-A) from Platanus occidentalis (Sycamore).